We begin with the raw amino-acid sequence, 776 residues long: Conserved oligomeric Golgi complex subunit 4 (776 aa).

2 positions are modified to phosphoserine: Ser-342 and Ser-345.

The protein belongs to the COG4 family. Component of the conserved oligomeric Golgi complex which is composed of eight different subunits and is required for normal Golgi morphology and localization.

The protein resides in the golgi apparatus membrane. In terms of biological role, required for normal Golgi function. The chain is Conserved oligomeric Golgi complex subunit 4 from Drosophila melanogaster (Fruit fly).